Reading from the N-terminus, the 788-residue chain is Protein FAR1-RELATED SEQUENCE 5 (788 aa).

The FAR1 domain maps to 87-179; sequence AFYNSYARRI…VKDHNHELVP (93 aa). One can recognise an MULE domain in the interval 299-395; it reads TVTFDTTYRS…CKWHILKKCQ (97 aa). The segment at 584 to 616 adopts an SWIM-type zinc-finger fold; that stretch reads FNVLEMRANCSCQMFEFSGIICRHILAVFRVTN. Residues 713 to 733 form a disordered region; it reads SSVTGGKHQQEVLAQPEPEDE. Residues 731-768 are a coiled coil; sequence EDEMDKKINQLRNELELANRKCEAYRTNLLSVLKEMED.

The protein belongs to the FHY3/FAR1 family. Expressed in hypocotyls, rosette and cauline leaves, inflorescences stems, flowers and siliques.

It localises to the nucleus. Functionally, putative transcription activator involved in regulating light control of development. This is Protein FAR1-RELATED SEQUENCE 5 (FRS5) from Arabidopsis thaliana (Mouse-ear cress).